Consider the following 106-residue polypeptide: Immunoglobulin lambda constant 7 (106 aa).

The Ig-like domain maps to 7–101 (PSVTLFPPSS…EGSTVEKTVA (95 aa)). An intrachain disulfide couples C28 to C87.

Immunoglobulins are composed of two identical heavy chains and two identical light chains; disulfide-linked.

It localises to the secreted. Its subcellular location is the cell membrane. Functionally, constant region of immunoglobulin light chains. Immunoglobulins, also known as antibodies, are membrane-bound or secreted glycoproteins produced by B lymphocytes. In the recognition phase of humoral immunity, the membrane-bound immunoglobulins serve as receptors which, upon binding of a specific antigen, trigger the clonal expansion and differentiation of B lymphocytes into immunoglobulins-secreting plasma cells. Secreted immunoglobulins mediate the effector phase of humoral immunity, which results in the elimination of bound antigens. The antigen binding site is formed by the variable domain of one heavy chain, together with that of its associated light chain. Thus, each immunoglobulin has two antigen binding sites with remarkable affinity for a particular antigen. The variable domains are assembled by a process called V-(D)-J rearrangement and can then be subjected to somatic hypermutations which, after exposure to antigen and selection, allow affinity maturation for a particular antigen. This is Immunoglobulin lambda constant 7 from Homo sapiens (Human).